Consider the following 647-residue polypeptide: Auxin efflux carrier component 2 (647 aa).

Residues 1 to 7 (MITGKDM) are Extracellular-facing. Residues 8–28 (YDVLAAMVPLYVAMILAYGSV) form a helical membrane-spanning segment. Residues 29 to 38 (RWWGIFTPDQ) lie on the Cytoplasmic side of the membrane. The helical transmembrane segment at 39 to 59 (CSGINRFVAVFAVPLLSFHFI) threads the bilayer. Valine 51 is a binding site for (indol-3-yl)acetate. The Extracellular segment spans residues 60 to 68 (SSNDPYAMN). A helical transmembrane segment spans residues 69–89 (YHFLAADSLQKVVILAALFLW). Over 90-100 (QAFSRRGSLEW) the chain is Cytoplasmic. The chain crosses the membrane as a helical span at residues 101 to 121 (MITLFSLSTLPNTLVMGIPLL). (indol-3-yl)acetate contacts are provided by asparagine 112 and leucine 114. Residues 122–131 (RAMYGDFSGN) lie on the Extracellular side of the membrane. The chain crosses the membrane as a helical span at residues 132–152 (LMVQIVVLQSIIWYTLMLFLF). Tyrosine 145 serves as a coordination point for (indol-3-yl)acetate. The Cytoplasmic segment spans residues 153 to 507 (EFRGAKLLIS…LIRNPNTYSS (355 aa)). 3 positions are modified to phosphoserine: serine 237, serine 258, and serine 310. The tract at residues 339–380 (SVPSYPPPNPMFTGSTSGASGVKKKESGGGGSGGGVGVGGQN) is disordered. Phosphothreonine is present on threonine 354. The segment covering 366–378 (GGGGSGGGVGVGG) has biased composition (gly residues). Serine 393 bears the Phosphoserine mark. 2 disordered regions span residues 397 to 420 (EANA…KVSI) and 440 to 481 (PGRK…QQMP). The helical transmembrane segment at 508–528 (LFGLAWSLVSFKWNIKMPTIM) threads the bilayer. Topologically, residues 529-531 (SGS) are extracellular. A helical membrane pass occupies residues 532–552 (ISILSDAGLGMAMFSLGLFMA). The Cytoplasmic segment spans residues 553-568 (LQPKIIACGKSVAGFA). Residues 569 to 589 (MAVRFLTGPAVIAATSIAIGI) form a helical membrane-spanning segment. At 590 to 592 (RGD) the chain is on the extracellular side. The chain crosses the membrane as a helical span at residues 593 to 613 (LLHIAIVQAALPQGIVPFVFA). (indol-3-yl)acetate contacts are provided by isoleucine 607 and valine 608. Over 614–626 (KEYNVHPDILSTA) the chain is Cytoplasmic. The helical transmembrane segment at 627–647 (VIFGMLVALPVTVLYYVLLGL) threads the bilayer.

The protein belongs to the auxin efflux carrier (TC 2.A.69.1) family. Homodimer. Interacts with FYPP1 and FYPP3. Component of a complex made of PINs (e.g. PIN1 and PIN2), MAB4/MELs (e.g. NPY1/MAB4 and NPY5/MEL1) and AGC kinases (e.g. D6PK and PID) at the plasma membrane. Binds directly to NPY1/MAB4, NPY5/MEL1 and PID. As to expression, root-specific. Localized to the cortex, epidermis and lateral root cap, predominantly at the upper side of cells.

It localises to the cell membrane. Functionally, acts as a component of the auxin efflux carrier. Seems to be involved in the root-specific auxin transport, and mediates the root gravitropism. Its particular localization suggests a role in the translocation of auxin towards the elongation zone. Recrutes NPY proteins (e.g. NPY1/MAB4 and NPY5/MEL1) to the plasma membrane in a polar basal localization in root epidermis; this activity is optimized by AGC kinases-mediated (e.g. D6PK and PID) phosphorylation that limits their lateral diffusion-based escape. The chain is Auxin efflux carrier component 2 from Arabidopsis thaliana (Mouse-ear cress).